Here is a 530-residue protein sequence, read N- to C-terminus: Probable 1,4-beta-D-glucan cellobiohydrolase B (530 aa).

An N-terminal signal peptide occupies residues 1 to 26 (MLASTFSYRMYKTALILAALLGSGQA). Residues 27 to 461 (QQVGTSQAEV…SNIKVGPIGS (435 aa)) form a catalytic region. The active-site Nucleophile is glutamate 238. Glutamate 243 functions as the Proton donor in the catalytic mechanism. N-linked (GlcNAc...) asparagine glycosylation occurs at asparagine 296. The disordered stretch occupies residues 462 to 492 (TFNSGGSNPGGGTTTTAKPTTTTTTAGSPGG). Residues 462–494 (TFNSGGSNPGGGTTTTAKPTTTTTTAGSPGGTG) form a ser/Thr-rich linker region. Residues 475-488 (TTTAKPTTTTTTAG) show a composition bias toward low complexity. Residues 494 to 530 (GVAQHYGQCGGNGWQGPTTCASPYTCQKLNDFYSQCL) form the CBM1 domain. 2 disulfides stabilise this stretch: cysteine 502–cysteine 519 and cysteine 513–cysteine 529.

It belongs to the glycosyl hydrolase 7 (cellulase C) family.

The protein localises to the secreted. It carries out the reaction Hydrolysis of (1-&gt;4)-beta-D-glucosidic linkages in cellulose and cellotetraose, releasing cellobiose from the non-reducing ends of the chains.. In terms of biological role, the biological conversion of cellulose to glucose generally requires three types of hydrolytic enzymes: (1) Endoglucanases which cut internal beta-1,4-glucosidic bonds; (2) Exocellobiohydrolases that cut the disaccharide cellobiose from the non-reducing end of the cellulose polymer chain; (3) Beta-1,4-glucosidases which hydrolyze the cellobiose and other short cello-oligosaccharides to glucose. In Neosartorya fischeri (strain ATCC 1020 / DSM 3700 / CBS 544.65 / FGSC A1164 / JCM 1740 / NRRL 181 / WB 181) (Aspergillus fischerianus), this protein is Probable 1,4-beta-D-glucan cellobiohydrolase B (cbhB).